The chain runs to 155 residues: NADPH-dependent 7-cyano-7-deazaguanine reductase (155 aa).

Cys-53 serves as the catalytic Thioimide intermediate. Residue Asp-60 is the Proton donor of the active site. Substrate-binding positions include 75-77 (VES) and 94-95 (HE).

This sequence belongs to the GTP cyclohydrolase I family. QueF type 1 subfamily.

The protein localises to the cytoplasm. It catalyses the reaction 7-aminomethyl-7-carbaguanine + 2 NADP(+) = 7-cyano-7-deazaguanine + 2 NADPH + 3 H(+). The protein operates within tRNA modification; tRNA-queuosine biosynthesis. Its function is as follows. Catalyzes the NADPH-dependent reduction of 7-cyano-7-deazaguanine (preQ0) to 7-aminomethyl-7-deazaguanine (preQ1). The polypeptide is NADPH-dependent 7-cyano-7-deazaguanine reductase (Brucella suis (strain ATCC 23445 / NCTC 10510)).